A 165-amino-acid chain; its full sequence is Glycosyl-4,4'-diaponeurosporenoate acyltransferase (165 aa).

The signal sequence occupies residues 1–28; it reads MKTMKKYIKTAFFCSMYWLIVQLNIANL. A helical transmembrane segment spans residues 126–145; sequence YINIFYAMIANVPIIIVQRY.

Belongs to the acyltransferase CrtO family.

The protein resides in the cell membrane. It participates in carotenoid biosynthesis; staphyloxanthin biosynthesis; staphyloxanthin from farnesyl diphosphate: step 5/5. In terms of biological role, catalyzes the acylation of glycosyl-4,4'-diaponeurosporenoate, i.e. the esterification of glucose at the C6'' position with the carboxyl group of the C(15) fatty acid 12-methyltetradecanoic acid, to yield staphyloxanthin. This is the last step in the biosynthesis of this orange pigment, present in most staphylococci strains. The chain is Glycosyl-4,4'-diaponeurosporenoate acyltransferase (crtO) from Staphylococcus aureus (strain bovine RF122 / ET3-1).